Here is a 152-residue protein sequence, read N- to C-terminus: UPF0266 membrane protein YobD (152 aa).

3 helical membrane passes run 6 to 26 (LVLI…QFIM), 45 to 65 (VDSV…VTSH), and 67 to 87 (AQMT…IFWI).

Belongs to the UPF0266 family.

The protein localises to the cell inner membrane. This is UPF0266 membrane protein YobD from Salmonella newport (strain SL254).